Reading from the N-terminus, the 362-residue chain is Protein MGF 360-18R (362 aa).

Belongs to the asfivirus MGF 360 family.

Functionally, plays a role in virus cell tropism, and may be required for efficient virus replication in macrophages. The polypeptide is Protein MGF 360-18R (African swine fever virus (isolate Warthog/Namibia/Wart80/1980) (ASFV)).